A 360-amino-acid chain; its full sequence is S-adenosylmethionine:tRNA ribosyltransferase-isomerase (360 aa).

This sequence belongs to the QueA family. In terms of assembly, monomer.

It is found in the cytoplasm. The enzyme catalyses 7-aminomethyl-7-carbaguanosine(34) in tRNA + S-adenosyl-L-methionine = epoxyqueuosine(34) in tRNA + adenine + L-methionine + 2 H(+). It participates in tRNA modification; tRNA-queuosine biosynthesis. Functionally, transfers and isomerizes the ribose moiety from AdoMet to the 7-aminomethyl group of 7-deazaguanine (preQ1-tRNA) to give epoxyqueuosine (oQ-tRNA). This chain is S-adenosylmethionine:tRNA ribosyltransferase-isomerase, found in Rhodopseudomonas palustris (strain TIE-1).